The primary structure comprises 348 residues: UDP-3-O-acylglucosamine N-acyltransferase (348 aa).

His-241 acts as the Proton acceptor in catalysis.

This sequence belongs to the transferase hexapeptide repeat family. LpxD subfamily. As to quaternary structure, homotrimer.

The catalysed reaction is a UDP-3-O-[(3R)-3-hydroxyacyl]-alpha-D-glucosamine + a (3R)-hydroxyacyl-[ACP] = a UDP-2-N,3-O-bis[(3R)-3-hydroxyacyl]-alpha-D-glucosamine + holo-[ACP] + H(+). The protein operates within bacterial outer membrane biogenesis; LPS lipid A biosynthesis. Its function is as follows. Catalyzes the N-acylation of UDP-3-O-acylglucosamine using 3-hydroxyacyl-ACP as the acyl donor. Is involved in the biosynthesis of lipid A, a phosphorylated glycolipid that anchors the lipopolysaccharide to the outer membrane of the cell. This is UDP-3-O-acylglucosamine N-acyltransferase from Neisseria meningitidis serogroup B (strain ATCC BAA-335 / MC58).